A 122-amino-acid polypeptide reads, in one-letter code: Large ribosomal subunit protein bL19 (122 aa).

The protein belongs to the bacterial ribosomal protein bL19 family.

In terms of biological role, this protein is located at the 30S-50S ribosomal subunit interface and may play a role in the structure and function of the aminoacyl-tRNA binding site. The chain is Large ribosomal subunit protein bL19 from Acinetobacter baumannii (strain AB307-0294).